We begin with the raw amino-acid sequence, 226 residues long: Leucyl/phenylalanyl-tRNA--protein transferase (226 aa).

Belongs to the L/F-transferase family.

The protein localises to the cytoplasm. The enzyme catalyses N-terminal L-lysyl-[protein] + L-leucyl-tRNA(Leu) = N-terminal L-leucyl-L-lysyl-[protein] + tRNA(Leu) + H(+). It catalyses the reaction N-terminal L-arginyl-[protein] + L-leucyl-tRNA(Leu) = N-terminal L-leucyl-L-arginyl-[protein] + tRNA(Leu) + H(+). The catalysed reaction is L-phenylalanyl-tRNA(Phe) + an N-terminal L-alpha-aminoacyl-[protein] = an N-terminal L-phenylalanyl-L-alpha-aminoacyl-[protein] + tRNA(Phe). In terms of biological role, functions in the N-end rule pathway of protein degradation where it conjugates Leu, Phe and, less efficiently, Met from aminoacyl-tRNAs to the N-termini of proteins containing an N-terminal arginine or lysine. This Bradyrhizobium diazoefficiens (strain JCM 10833 / BCRC 13528 / IAM 13628 / NBRC 14792 / USDA 110) protein is Leucyl/phenylalanyl-tRNA--protein transferase.